The chain runs to 400 residues: Acetate kinase (400 aa).

N7 contributes to the Mg(2+) binding site. K14 is a binding site for ATP. R91 lines the substrate pocket. The Proton donor/acceptor role is filled by D148. Residues 208 to 212 (HLGNG), 284 to 286 (DMR), and 332 to 336 (GVGEN) each bind ATP. E384 contacts Mg(2+).

This sequence belongs to the acetokinase family. In terms of assembly, homodimer. Requires Mg(2+) as cofactor. The cofactor is Mn(2+).

Its subcellular location is the cytoplasm. The catalysed reaction is acetate + ATP = acetyl phosphate + ADP. It functions in the pathway metabolic intermediate biosynthesis; acetyl-CoA biosynthesis; acetyl-CoA from acetate: step 1/2. In terms of biological role, catalyzes the formation of acetyl phosphate from acetate and ATP. Can also catalyze the reverse reaction. The protein is Acetate kinase of Coprothermobacter proteolyticus (strain ATCC 35245 / DSM 5265 / OCM 4 / BT).